We begin with the raw amino-acid sequence, 318 residues long: NADH-ubiquinone oxidoreductase chain 1 (318 aa).

A run of 8 helical transmembrane segments spans residues 2–22 (FMIN…FLTL), 68–88 (ITMF…MWTP), 100–120 (LGVL…LWSG), 146–166 (LAII…PALI), 171–191 (HMWL…STLA), 222–242 (LFFL…TILF), 253–273 (ELYT…FLWV), and 294–314 (LPLT…TAGI).

It belongs to the complex I subunit 1 family.

It localises to the mitochondrion inner membrane. It carries out the reaction a ubiquinone + NADH + 5 H(+)(in) = a ubiquinol + NAD(+) + 4 H(+)(out). Its function is as follows. Core subunit of the mitochondrial membrane respiratory chain NADH dehydrogenase (Complex I) that is believed to belong to the minimal assembly required for catalysis. Complex I functions in the transfer of electrons from NADH to the respiratory chain. The immediate electron acceptor for the enzyme is believed to be ubiquinone. The polypeptide is NADH-ubiquinone oxidoreductase chain 1 (MT-ND1) (Coelops frithii (East Asian tailless leaf-nosed bat)).